Reading from the N-terminus, the 2153-residue chain is MGAQVSRQNVGTHSTQNMVSNGSSLNYFNINYFKDAASSGASRLDFSQDPSKFTDPVKDVLEKGIPTLQSPSVEACGYSDRIIQITRGDSTITSQDVANAVVGYGVWPHYLTPQDATAIDKPTQPDTSSNRFYTLDSKMWNSTSKGWWWKLPDALKDMGIFGENMFYHFLGRSGYTVHVQCNASKFHQGTLLVVMIPEHQLATVNKGNVNAGYKYTHPGEAGREVGTQVENEKQPSDDNWLNFDGTLLGNLLIFPHQFINLRSNNSATLIVPYVNAVPMDSMVRHNNWSLVIIPVCQLQSNNISNIVPITVSISPMCAEFSGARAKTVVQGLPVYVTPGSGQFMTTDDMQSPCALPWYHPTKEIFIPGEVKNLIEMCQVDTLIPINSTQSNIGNVSMYTVTLSPQTKLAEEIFAIKVDIASHPLATTLIGEIASYFTHWTGSLRFSFMFCGTANTTLKVLLAYTPPGIGKPRSRKEAMLGTHVVWDVGLQSTVSLVVPWISASQYRFTTPDTYSSAGYITCWYQTNFVVPPNTPNTAEMLCFVSGCKDFCLRMARDTDLHKQTGPITQNPVERYVDEVLNEVLVVPNINQSHPTTSNAAPVLDAAETGHTNKIQPEDTIETRYVQSSQTLDEMSVESFLGRSGCIHESVLDIVDNYNDQSFTKWNINLQEMAQIRRKFEMFTYARFDSEITMVPSVAAKDGHIGHIVMQYMYVPPGAPIPTTRDDYAWQSGTNASVFWQHGQPFPRFSLPFLSIASAYYMFYDGYDGDTYKSRYGTVVTNDMGTLCSRIVTSEQLHKVKVVTRIYHKAKHTKAWCPRPPRAVQYSHTHTTNYKLSSEVHNDVAIRPRTNLTTVGPSDMYVHVGNLIYRNLHLFNSDIHDSILVSYSSDLIIYRTSTQGDGYIPTCNCTEATYYCKHKNRYYPINVTPHDWYEIQESEYYPKHIQYNLLIGEGPCEPGDCGGKLLCKHGVIGIITAGGEGHVAFIDLRHFHCAEEQGITDYIHMLGEAFGSGFVDSVKDQINSINPINNISSKMVKWMLRIISAMVIIIRNSSDPQTIIATLTLIGCNGSPWRFLKEKFCKWTQLTYIHKESDSWLKKFTEMCNAARGLEWIGNKISKFIDWMKSMLPQAQLKVKYLSELKKLNFLEKQVENLRAADTNTQEKIKCEIDTLHDLSCKFLPLYASEAKRIKVLYHKCTNIIKQKKRSEPVAVMIHGPPGTGKSITTSFLARMITNESDIYSLPPDPKYFDGYDNQSVVIMDDIMQNPGGEDMTLFCQMVSSVTFIPPMADLPDKGKPFDSRFVLCSTNHSLLAPPTISSLPAMNRRFYLDLDILVHDNYKDNQGKLDVSRAFRLCDVDSKIGNAKCCPFVCGKAVTFKDRNTCRTYSLSQIYNQILEEDKRRRQVVDVMSAIFQGPISMDKPPPPAITDLLRSVRTPEVIKYCQDNKWIVPADCQIERDLNIANSIITIIANIISIAGIIYIIYKLFCSLQGPYSGEPKPKTKVPERRVVAQGPEEEFGMSIIKNNTCVVTTTNGKFTGLGIYDRILILPTHADPGSEIQVNGIHTKVLDSYDLFNKEGVKLEITVLKLDRNEKFRDIRKYIPESEDDYPECNLALVANQTEPTIIKVGDVVSYGNILLSGTQTARMLKYNYPTKSGYCGGVLYKIGQILGIHVGGNGRDGFSSMLLRSYFTEQQGQIQISKHVKDVGLPSIHTPTKTKLQPSVFYDIFPGSKEPAVLTEKDPRLKVDFDSALFSKYKGNTECSLNEHIQVAVAHYSAQLATLDIDPQPIAMEDSVFGMDGLEALDLNTSAGYPYVTLGIKKKDLINNKTKDISKLKLALDKYDVDLPMITFLKDELRKKDKIAAGKTRVIEASSINDTILFRTVYGNLFSKFHLNPGVVTGCAVGCDPETFWSKIPLMLDGDCIMAFDYTNYDGSIHPIWFKALGMVLDNLSFNPTLINRLCNSKHIFKSTYYEVEGGVPSGCSGTSIFNSMINNIIIRTLVLDAYKHIDLDKLKIIAYGDDVIFSYKYKLDMEAIAKEGQKYGLTITPADKSSEFKELDYGNVTFLKRGFRQDDKYKFLIHPTFPVEEIYESIRWTKKPSQMQEHVLSLCHLMWHNGPEIYKDFETKIRSVSAGRALYIPPYELLRHEWYEKF.

Gly-2 carries the N-myristoyl glycine; by host lipid modification. Topologically, residues 2-1466 are cytoplasmic; that stretch reads GAQVSRQNVG…DLNIANSIIT (1465 aa). Residues 565-582 form an amphipathic alpha-helix region; that stretch reads PITQNPVERYVDEVLNEV. Residues His-871 and Asp-888 each act as for protease 2A activity in the active site. Cys-905 and Cys-907 together coordinate Zn(2+). The active-site For protease 2A activity is Cys-959. Residues Cys-965 and His-967 each coordinate Zn(2+). Positions 1091–1160 are membrane-binding; that stretch reads SDSWLKKFTE…NLRAADTNTQ (70 aa). Residues 1091–1224 are oligomerization; the sequence is SDSWLKKFTE…PPGTGKSITT (134 aa). An RNA-binding region spans residues 1112–1116; the sequence is GNKIS. The 161-residue stretch at 1186–1346 folds into the SF3 helicase domain; it reads KRIKVLYHKC…YKDNQGKLDV (161 aa). Zn(2+)-binding residues include Cys-1353, Cys-1364, and Cys-1369. Residues 1353 to 1369 form a C4-type; degenerate zinc finger; it reads CDVDSKIGNAKCCPFVC. Residues 1396–1403 form an RNA-binding region; sequence EDKRRRQV. The tract at residues 1407–1412 is oligomerization; that stretch reads MSAIFQ. The stretch at 1467-1482 is an intramembrane region; it reads IIANIISIAGIIYIIY. Topologically, residues 1483–2153 are cytoplasmic; sequence KLFCSLQGPY…LLRHEWYEKF (671 aa). Tyr-1492 is modified (O-(5'-phospho-RNA)-tyrosine). Residues 1511–1689 enclose the Peptidase C3 domain; that stretch reads GPEEEFGMSI…FSSMLLRSYF (179 aa). Catalysis depends on for protease 3C activity residues His-1550, Glu-1581, and Cys-1657. In terms of domain architecture, RdRp catalytic spans 1921-2034; it reads DCIMAFDYTN…SYKYKLDMEA (114 aa). 2 residues coordinate Mg(2+): Asp-1927 and Asp-2020.

The protein belongs to the picornaviruses polyprotein family. Interacts with capsid protein VP1 and capsid protein VP3 to form heterotrimeric protomers. In terms of assembly, interacts with capsid protein VP0, and capsid protein VP3 to form heterotrimeric protomers. Five protomers subsequently associate to form pentamers which serve as building blocks for the capsid. Interacts with capsid protein VP2, capsid protein VP3 and capsid protein VP4 following cleavage of capsid protein VP0. As to quaternary structure, interacts with capsid protein VP1 and capsid protein VP3 in the mature capsid. Interacts with capsid protein VP0 and capsid protein VP1 to form heterotrimeric protomers. Five protomers subsequently associate to form pentamers which serve as building blocks for the capsid. Interacts with capsid protein VP4 in the mature capsid. Interacts with protein 2C; this interaction may be important for virion morphogenesis. In terms of assembly, interacts with capsid protein VP1 and capsid protein VP3. As to quaternary structure, homodimer. Homohexamer; forms a hexameric ring structure with 6-fold symmetry characteristic of AAA+ ATPases. Interacts (via N-terminus) with host RTN3 (via reticulon domain); this interaction is important for viral replication. Interacts with capsid protein VP3; this interaction may be important for virion morphogenesis. In terms of assembly, interacts with protein 3CD. As to quaternary structure, homodimer. Interacts with host GBF1. Interacts (via GOLD domain) with host ACBD3 (via GOLD domain); this interaction allows the formation of a viral protein 3A/ACBD3 heterotetramer with a 2:2 stoichiometry, which will stimulate the recruitment of host PI4KB in order to synthesize PI4P at the viral RNA replication sites. Interacts with RNA-directed RNA polymerase. In terms of assembly, interacts with protein 3AB and with RNA-directed RNA polymerase. As to quaternary structure, interacts with Viral protein genome-linked and with protein 3CD. The cofactor is Mg(2+). In terms of processing, specific enzymatic cleavages in vivo by the viral proteases yield processing intermediates and the mature proteins. Post-translationally, myristoylation is required for the formation of pentamers during virus assembly. Further assembly of 12 pentamers and a molecule of genomic RNA generates the provirion. During virion maturation, immature virions are rendered infectious following cleavage of VP0 into VP4 and VP2. This maturation seems to be an autocatalytic event triggered by the presence of RNA in the capsid and it is followed by a conformational change infectious virion. In terms of processing, myristoylation is required during RNA encapsidation and formation of the mature virus particle. Post-translationally, VPg is uridylylated by the polymerase into VPg-pUpU. This acts as a nucleotide-peptide primer for the genomic RNA replication.

Its subcellular location is the virion. It is found in the host cytoplasm. The protein resides in the host cytoplasmic vesicle membrane. The protein localises to the host nucleus. The enzyme catalyses a ribonucleoside 5'-triphosphate + H2O = a ribonucleoside 5'-diphosphate + phosphate + H(+). The catalysed reaction is Selective cleavage of Tyr-|-Gly bond in the picornavirus polyprotein.. It carries out the reaction RNA(n) + a ribonucleoside 5'-triphosphate = RNA(n+1) + diphosphate. It catalyses the reaction Selective cleavage of Gln-|-Gly bond in the poliovirus polyprotein. In other picornavirus reactions Glu may be substituted for Gln, and Ser or Thr for Gly.. Its activity is regulated as follows. Replication or transcription is subject to high level of random mutations by the nucleotide analog ribavirin. Functionally, forms an icosahedral capsid of pseudo T=3 symmetry with capsid proteins VP2 and VP3. The capsid is 300 Angstroms in diameter, composed of 60 copies of each capsid protein and enclosing the viral positive strand RNA genome. Capsid protein VP1 mainly forms the vertices of the capsid. Capsid protein VP1 interacts with host cell receptor to provide virion attachment to target host cells. This attachment induces virion internalization. Tyrosine kinases are probably involved in the entry process. After binding to its receptor, the capsid undergoes conformational changes. Capsid protein VP1 N-terminus (that contains an amphipathic alpha-helix) and capsid protein VP4 are externalized. Together, they shape a pore in the host membrane through which viral genome is translocated to host cell cytoplasm. In terms of biological role, forms an icosahedral capsid of pseudo T=3 symmetry with capsid proteins VP2 and VP3. The capsid is 300 Angstroms in diameter, composed of 60 copies of each capsid protein and enclosing the viral positive strand RNA genome. Lies on the inner surface of the capsid shell. After binding to the host receptor, the capsid undergoes conformational changes. Capsid protein VP4 is released, Capsid protein VP1 N-terminus is externalized, and together, they shape a pore in the host membrane through which the viral genome is translocated into the host cell cytoplasm. Its function is as follows. Component of immature procapsids, which is cleaved into capsid proteins VP4 and VP2 after maturation. Allows the capsid to remain inactive before the maturation step. Functionally, cysteine protease that cleaves viral polyprotein and specific host proteins. It is responsible for the autocatalytic cleavage between the P1 and P2 regions, which is the first cleavage occurring in the polyprotein. Also cleaves the host translation initiation factor EIF4G1, in order to shut down the capped cellular mRNA translation. Inhibits the host nucleus-cytoplasm protein and RNA trafficking by cleaving host members of the nuclear pores. Counteracts stress granule formation probably by antagonizing its assembly or promoting its dissassembly. In terms of biological role, plays an essential role in the virus replication cycle by acting as a viroporin. Creates a pore in the host endoplasmic reticulum and as a consequence releases Ca2+ in the cytoplasm of infected cell. In turn, high levels of cytoplasmic calcium may trigger membrane trafficking and transport of viral ER-associated proteins to viroplasms, sites of viral genome replication. Induces and associates with structural rearrangements of intracellular membranes. Displays RNA-binding, nucleotide binding and NTPase activities. May play a role in virion morphogenesis and viral RNA encapsidation by interacting with the capsid protein VP3. Its function is as follows. Localizes the viral replication complex to the surface of membranous vesicles. It inhibits host cell endoplasmic reticulum-to-Golgi apparatus transport and causes the disassembly of the Golgi complex, possibly through GBF1 interaction. This would result in depletion of MHC, trail receptors and IFN receptors at the host cell surface. Plays an essential role in viral RNA replication by recruiting ACBD3 and PI4KB at the viral replication sites, thereby allowing the formation of the rearranged membranous structures where viral replication takes place. Functionally, acts as a primer for viral RNA replication and remains covalently bound to viral genomic RNA. VPg is uridylylated prior to priming replication into VPg-pUpU. The oriI viral genomic sequence may act as a template for this. The VPg-pUpU is then used as primer on the genomic RNA poly(A) by the RNA-dependent RNA polymerase to replicate the viral genome. During genome replication, the VPg-RNA linkage is removed by the host TDP2, thereby accelerating replication. During the late stage of the replication cycle, host TDP2 is excluded from sites of viral RNA synthesis and encapsidation, allowing for the generation of progeny virions. In terms of biological role, involved in the viral replication complex and viral polypeptide maturation. It exhibits protease activity with a specificity and catalytic efficiency that is different from protease 3C. Protein 3CD lacks polymerase activity. Protein 3CD binds to the 5'UTR of the viral genome. Major viral protease that mediates proteolytic processing of the polyprotein. Cleaves host EIF5B, contributing to host translation shutoff. Also cleaves host PABPC1, contributing to host translation shutoff. Cleaves host NLRP1, triggers host N-glycine-mediated degradation of the autoinhibitory NLRP1 N-terminal fragment. Its function is as follows. Replicates the viral genomic RNA on the surface of intracellular membranes. May form linear arrays of subunits that propagate along a strong head-to-tail interaction called interface-I. Covalently attaches UMP to a tyrosine of VPg, which is used to prime RNA synthesis. The positive stranded RNA genome is first replicated at virus induced membranous vesicles, creating a dsRNA genomic replication form. This dsRNA is then used as template to synthesize positive stranded RNA genomes. ss(+)RNA genomes are either translated, replicated or encapsidated. The chain is Genome polyprotein from Human rhinovirus 16 (HRV-16).